Here is a 132-residue protein sequence, read N- to C-terminus: MPKTYPEELAEWVKGREAKKPRQDKHVVAFLAVKSDVQAALDAGYAMKTIWEHMKETGRLRCRYETFTQHVKRYIKAAPVASPPPPATPPDSQPKGAKPEPKAAPPASESKSEPPKIGGFTFDATPKKEDLL.

Residues 76-132 (KAAPVASPPPPATPPDSQPKGAKPEPKAAPPASESKSEPPKIGGFTFDATPKKEDLL) form a disordered region. Residues 81–92 (ASPPPPATPPDS) show a composition bias toward pro residues.

The protein is Protein TraK (traK) of Escherichia coli.